The sequence spans 306 residues: Non-specific ribonucleoside hydrolase RihC (306 aa).

H235 is a catalytic residue.

It belongs to the IUNH family. RihC subfamily.

Its function is as follows. Hydrolyzes both purine and pyrimidine ribonucleosides with a broad-substrate specificity. The chain is Non-specific ribonucleoside hydrolase RihC from Salmonella agona (strain SL483).